The following is a 250-amino-acid chain: tRNA (guanine-N(1)-)-methyltransferase (250 aa).

Residues glycine 115 and 135-140 (LGDFVL) each bind S-adenosyl-L-methionine.

It belongs to the RNA methyltransferase TrmD family. Homodimer.

It localises to the cytoplasm. It carries out the reaction guanosine(37) in tRNA + S-adenosyl-L-methionine = N(1)-methylguanosine(37) in tRNA + S-adenosyl-L-homocysteine + H(+). Specifically methylates guanosine-37 in various tRNAs. This is tRNA (guanine-N(1)-)-methyltransferase from Legionella pneumophila subsp. pneumophila (strain Philadelphia 1 / ATCC 33152 / DSM 7513).